The sequence spans 382 residues: Alcohol dehydrogenase 4 (382 aa).

NAD(+) is bound by residues aspartate 40, asparagine 72, glycine 99, serine 100, threonine 139, threonine 140, threonine 148, phenylalanine 150, lysine 161, and glycine 183. Fe(2+)-binding residues include aspartate 195, histidine 199, and histidine 264. Residues histidine 268 and histidine 278 each contribute to the NAD(+) site. Position 278 (histidine 278) interacts with Fe(2+).

It belongs to the iron-containing alcohol dehydrogenase family. In terms of assembly, homodimer. Zn(2+) serves as cofactor. Fe(2+) is required as a cofactor.

It localises to the mitochondrion. The catalysed reaction is a primary alcohol + NAD(+) = an aldehyde + NADH + H(+). It carries out the reaction ethanol + NAD(+) = acetaldehyde + NADH + H(+). Inhibited by EDTA. Its function is as follows. Alcohol dehydrogenase specific for ethanol. Acts mainyl as a mitochondrial formaldehyde dehydrogenase and has no effect on ethanol production. Shows drastically reduced activity towards primary alcohols from 4 carbon atoms upward. Isomers of aliphatic alcohol, as well as secondary alcohols and glycerol are not used at all. The role of ADH4 in yeast metabolism is not yet known, but ADH4 is not responsible for the production of ethanol during growth on glucose nor responsible for the oxidation of ethanol to acetaldehyde. This Saccharomyces cerevisiae (strain ATCC 204508 / S288c) (Baker's yeast) protein is Alcohol dehydrogenase 4.